The primary structure comprises 65 residues: Large ribosomal subunit protein bL35 (65 aa).

Over residues 1 to 16 (MPKMKTKKSAAKRFKV) the composition is skewed to basic residues. The segment at 1–25 (MPKMKTKKSAAKRFKVRGSGSIKRG) is disordered.

This sequence belongs to the bacterial ribosomal protein bL35 family.

The polypeptide is Large ribosomal subunit protein bL35 (Bordetella parapertussis (strain 12822 / ATCC BAA-587 / NCTC 13253)).